Reading from the N-terminus, the 702-residue chain is Acetylcholinesterase (702 aa).

Positions 1 to 36 (MEIRGLITRLLGPCHLRHLILCSLGLYSILVQSVHC) are cleaved as a signal peptide. Residues 107–134 (HIHSTTTRRRGLTRRESSSDATDSDPLV) are disordered. The N-linked (GlcNAc...) asparagine glycan is linked to N187. Cysteines 195 and 222 form a disulfide. S327 functions as the Acyl-ester intermediate in the catalytic mechanism. C381 and C394 are disulfide-bonded. Residues E453 and H567 each act as charge relay system in the active site. A disulfide bond links C529 and C650. N637 carries N-linked (GlcNAc...) asparagine glycosylation.

The protein belongs to the type-B carboxylesterase/lipase family.

The protein localises to the synapse. The protein resides in the secreted. Its subcellular location is the cell membrane. It carries out the reaction acetylcholine + H2O = choline + acetate + H(+). Functionally, rapidly hydrolyzes choline released into the synapse. The sequence is that of Acetylcholinesterase (ACHE1) from Culex pipiens (House mosquito).